Consider the following 502-residue polypeptide: Probable cobyric acid synthase (502 aa).

Residues 250–448 form the GATase cobBQ-type domain; it reads KITIGTLRLP…FHGIFHNFEF (199 aa). The Nucleophile role is filled by C330. The active site involves H440.

Belongs to the CobB/CobQ family. CobQ subfamily.

It functions in the pathway cofactor biosynthesis; adenosylcobalamin biosynthesis. Catalyzes amidations at positions B, D, E, and G on adenosylcobyrinic A,C-diamide. NH(2) groups are provided by glutamine, and one molecule of ATP is hydrogenolyzed for each amidation. The polypeptide is Probable cobyric acid synthase (Methanosphaera stadtmanae (strain ATCC 43021 / DSM 3091 / JCM 11832 / MCB-3)).